The primary structure comprises 551 residues: Lysine--tRNA ligase (551 aa).

The short motif at 54-62 is the 'HIGH' region element; sequence PSGLPHIGT. The short motif at 303–307 is the 'KMSKS' region element; that stretch reads KISKS. Residue lysine 306 participates in ATP binding.

This sequence belongs to the class-I aminoacyl-tRNA synthetase family.

The protein resides in the cytoplasm. It carries out the reaction tRNA(Lys) + L-lysine + ATP = L-lysyl-tRNA(Lys) + AMP + diphosphate. The sequence is that of Lysine--tRNA ligase from Brucella melitensis biotype 1 (strain ATCC 23456 / CCUG 17765 / NCTC 10094 / 16M).